Reading from the N-terminus, the 857-residue chain is uncharacterized protein (857 aa).

Disordered regions lie at residues 316–339 (PPAP…TKEN), 484–561 (AKQP…PRTN), 619–777 (GQFP…PKPQ), and 809–836 (EQRP…STGK). Basic and acidic residues-rich tracts occupy residues 324 to 339 (PENK…TKEN), 518 to 534 (KKTE…KAEE), and 630 to 640 (QRAESSIDKDC). Residues 683 to 700 (RTTTVQPHSHSAQPTTLR) show a composition bias toward polar residues. The span at 708–725 (SSSLIASAKPAPPISSSS) shows a compositional bias: low complexity. A compositionally biased stretch (polar residues) spans 726-738 (TGPNVTNPNQSSA). A compositionally biased stretch (basic and acidic residues) spans 809 to 828 (EQRPEREAMKRQAQQERENA).

This is an uncharacterized protein from Mus musculus (Mouse).